The sequence spans 273 residues: Ribosomal RNA small subunit methyltransferase A (273 aa).

S-adenosyl-L-methionine contacts are provided by Asn18, Leu20, Gly45, Glu66, Asp91, and Asn113.

Belongs to the class I-like SAM-binding methyltransferase superfamily. rRNA adenine N(6)-methyltransferase family. RsmA subfamily.

The protein localises to the cytoplasm. The enzyme catalyses adenosine(1518)/adenosine(1519) in 16S rRNA + 4 S-adenosyl-L-methionine = N(6)-dimethyladenosine(1518)/N(6)-dimethyladenosine(1519) in 16S rRNA + 4 S-adenosyl-L-homocysteine + 4 H(+). Its function is as follows. Specifically dimethylates two adjacent adenosines (A1518 and A1519) in the loop of a conserved hairpin near the 3'-end of 16S rRNA in the 30S particle. May play a critical role in biogenesis of 30S subunits. This chain is Ribosomal RNA small subunit methyltransferase A, found in Klebsiella pneumoniae (strain 342).